The following is an 83-amino-acid chain: Small ribosomal subunit protein bS20 (83 aa).

The interval 1–25 (MPNIKSAIKRVNTTHTAEERNISQK) is disordered. Residues 16–25 (TAEERNISQK) are compositionally biased toward basic and acidic residues.

Belongs to the bacterial ribosomal protein bS20 family.

Functionally, binds directly to 16S ribosomal RNA. The sequence is that of Small ribosomal subunit protein bS20 from Staphylococcus saprophyticus subsp. saprophyticus (strain ATCC 15305 / DSM 20229 / NCIMB 8711 / NCTC 7292 / S-41).